Reading from the N-terminus, the 396-residue chain is Ornithine aminotransferase (396 aa).

K255 is modified (N6-(pyridoxal phosphate)lysine).

It belongs to the class-III pyridoxal-phosphate-dependent aminotransferase family. OAT subfamily. The cofactor is pyridoxal 5'-phosphate.

It is found in the cytoplasm. The enzyme catalyses a 2-oxocarboxylate + L-ornithine = L-glutamate 5-semialdehyde + an L-alpha-amino acid. It participates in amino-acid biosynthesis; L-proline biosynthesis; L-glutamate 5-semialdehyde from L-ornithine: step 1/1. In terms of biological role, catalyzes the interconversion of ornithine to glutamate semialdehyde. This Staphylococcus epidermidis (strain ATCC 12228 / FDA PCI 1200) protein is Ornithine aminotransferase.